Here is a 249-residue protein sequence, read N- to C-terminus: Uridylate kinase (249 aa).

Position 21–24 (21–24 (KLSG)) interacts with ATP. Gly-63 contacts UMP. Residues Gly-64 and Arg-68 each coordinate ATP. Residues Asp-84 and 145–152 (TGNPFVTT) contribute to the UMP site. ATP is bound by residues Thr-172, Tyr-178, and Asp-181.

It belongs to the UMP kinase family. As to quaternary structure, homohexamer.

The protein resides in the cytoplasm. The enzyme catalyses UMP + ATP = UDP + ADP. Its pathway is pyrimidine metabolism; CTP biosynthesis via de novo pathway; UDP from UMP (UMPK route): step 1/1. Inhibited by UTP. Catalyzes the reversible phosphorylation of UMP to UDP. The protein is Uridylate kinase of Francisella tularensis subsp. tularensis (strain FSC 198).